The following is a 443-amino-acid chain: ATP-dependent protease ATPase subunit HslU (443 aa).

Residues V18 and 60–65 each bind ATP; that span reads GVGKTE. The disordered stretch occupies residues 139–160; it reads AKNNWGQPEESGEPSSARQNFR. D256, E321, and R393 together coordinate ATP.

This sequence belongs to the ClpX chaperone family. HslU subfamily. As to quaternary structure, a double ring-shaped homohexamer of HslV is capped on each side by a ring-shaped HslU homohexamer. The assembly of the HslU/HslV complex is dependent on binding of ATP.

Its subcellular location is the cytoplasm. Its function is as follows. ATPase subunit of a proteasome-like degradation complex; this subunit has chaperone activity. The binding of ATP and its subsequent hydrolysis by HslU are essential for unfolding of protein substrates subsequently hydrolyzed by HslV. HslU recognizes the N-terminal part of its protein substrates and unfolds these before they are guided to HslV for hydrolysis. The protein is ATP-dependent protease ATPase subunit HslU of Sodalis glossinidius (strain morsitans).